We begin with the raw amino-acid sequence, 615 residues long: Mitochondrial distribution and morphology protein 34 (615 aa).

An SMP-LTD domain is found at 1-195 (MAFNFNWSPL…LPAIIHRLSL (195 aa)). Disordered regions lie at residues 293–313 (SDKP…RTSS), 346–566 (ATTG…PQPD), and 596–615 (PAFW…YEPR). Residues 301–313 (TPASTPNLHRTSS) show a composition bias toward polar residues. Positions 346-355 (ATTGLSLGSG) are enriched in low complexity. The segment covering 356–367 (RHSKAGRKKKMR) has biased composition (basic residues). 3 stretches are compositionally biased toward polar residues: residues 384-403 (IGST…TRTP), 435-446 (DATTSARASESS), and 457-499 (VTAQ…YSSR). The span at 517–557 (QQQQFQQQQQQQQQQQQQQQQQQQQQQQQQQQQQQQQQQQQ) shows a compositional bias: low complexity. Residues 596-606 (PAFWEDSHQHD) show a composition bias toward basic and acidic residues.

Belongs to the MDM34 family. As to quaternary structure, component of the ER-mitochondria encounter structure (ERMES) or MDM complex, composed of mmm-1, mdm10, mdm12 and mdm34.

It localises to the mitochondrion outer membrane. Its function is as follows. Component of the ERMES/MDM complex, which serves as a molecular tether to connect the endoplasmic reticulum (ER) and mitochondria. Components of this complex are involved in the control of mitochondrial shape and protein biogenesis, and function in nonvesicular lipid trafficking between the ER and mitochondria. Mdm34 is required for the interaction of the ER-resident membrane protein mmm-1 and the outer mitochondrial membrane-resident beta-barrel protein mdm10. This chain is Mitochondrial distribution and morphology protein 34, found in Neurospora crassa (strain ATCC 24698 / 74-OR23-1A / CBS 708.71 / DSM 1257 / FGSC 987).